A 621-amino-acid polypeptide reads, in one-letter code: Probable potassium transport system protein Kup 2 (621 aa).

The next 12 helical transmembrane spans lie at 9–29, 48–68, 101–121, 136–156, 164–184, 210–230, 246–266, 275–295, 336–356, 364–384, 393–413, and 418–438; these read MAGLTLAALGVVYGDIGTSPL, IFGILSLIFWSLIFVVSVKYV, IVLLGLFGAALFYGDAIITPA, SGMEAYVLPMAVGVLVGLFLL, VGLMFGPVMMVWFAILGILGL, GFHAFLTLGSVVLALTGAEAL, WFSLVLPGLGLNYFGQGALLM, PFFLLAPDWALLPMIALATLA, IYMPFINWALLVAVLVVVLTF, AAYGIAVTGTMLITTMLFFVV, LPLALGITLLFGVIDTAFFAA, and VADGGWLPLVMGMAIFTLMST.

This sequence belongs to the HAK/KUP transporter (TC 2.A.72) family.

It localises to the cell inner membrane. The enzyme catalyses K(+)(in) + H(+)(in) = K(+)(out) + H(+)(out). In terms of biological role, transport of potassium into the cell. Likely operates as a K(+):H(+) symporter. This chain is Probable potassium transport system protein Kup 2, found in Chromobacterium violaceum (strain ATCC 12472 / DSM 30191 / JCM 1249 / CCUG 213 / NBRC 12614 / NCIMB 9131 / NCTC 9757 / MK).